Reading from the N-terminus, the 313-residue chain is Malate dehydrogenase (313 aa).

NAD(+) contacts are provided by residues 8 to 13 (GAGNVG) and aspartate 33. Arginine 83 and arginine 89 together coordinate substrate. Residues asparagine 96 and 119–121 (ISN) each bind NAD(+). The substrate site is built by asparagine 121 and arginine 152. The active-site Proton acceptor is the histidine 176.

This sequence belongs to the LDH/MDH superfamily. MDH type 3 family.

The enzyme catalyses (S)-malate + NAD(+) = oxaloacetate + NADH + H(+). Catalyzes the reversible oxidation of malate to oxaloacetate. This Bacteroides thetaiotaomicron (strain ATCC 29148 / DSM 2079 / JCM 5827 / CCUG 10774 / NCTC 10582 / VPI-5482 / E50) protein is Malate dehydrogenase.